The sequence spans 192 residues: Natural cytotoxicity triggering receptor 3 (192 aa).

Positions 1-18 (MAKVLLIVFIMVYAGSCA) are cleaved as a signal peptide. An Ig-like domain is found at 19–126 (IWVSQPPEIR…VGTGNGTRLV (108 aa)). Over 19–147 (IWVSQPPEIR…AEPERAAYTS (129 aa)) the chain is Extracellular. Cysteine 39 and cysteine 108 are disulfide-bonded. N-linked (GlcNAc...) asparagine glycosylation is found at asparagine 42 and asparagine 121. Residues 148–168 (LLLRAGVYALSFLSVATGSVI) traverse the membrane as a helical segment. The Cytoplasmic segment spans residues 169–192 (YYQGKCLCHVGNTATPPTASEERF).

The protein belongs to the natural cytotoxicity receptor (NCR) family. In terms of assembly, homodimer in the unliganted form. Interacts with CD3Z. Interacts with and is activated by binding to NCR3LG1. Interacts with and is activated by binding to BAG6. Interacts with and is inhibited by binding to LGALS3.

The protein localises to the cell membrane. Cell membrane receptor of natural killer/NK cells that is activated by binding of extracellular ligands including BAG6 and NCR3LG1. Stimulates NK cells cytotoxicity toward neighboring cells producing these ligands. It controls, for instance, NK cells cytotoxicity against tumor cells. Engagement of NCR3 by BAG6 also promotes myeloid dendritic cells (DC) maturation, both through killing DCs that did not acquire a mature phenotype, and inducing the release by NK cells of TNFA and IFNG that promote DC maturation. This is Natural cytotoxicity triggering receptor 3 (Ncr3) from Rattus norvegicus (Rat).